Here is a 673-residue protein sequence, read N- to C-terminus: Annexin A6 (673 aa).

N-acetylalanine is present on Ala-2. At Ser-13 the chain carries Phosphoserine. Annexin repeat units lie at residues 20 to 91, 92 to 163, 175 to 247, 251 to 322, 363 to 434, 435 to 506, 521 to 595, and 599 to 670; these read FDAN…NLMR, PLAY…VLLQ, DLVQ…AVVK, STPE…KLCG, FNPD…GLMM, PPAH…SLAT, EDAQ…AIVQ, and NKPL…ALCG. Tyr-30 bears the Phosphotyrosine mark. N6-acetyllysine is present on residues Lys-63, Lys-68, Lys-75, and Lys-81. Tyr-201 carries the phosphotyrosine modification. Lys-306, Lys-370, and Lys-418 each carry N6-acetyllysine. The residue at position 422 (Ser-422) is a Phosphoserine. Lys-483 carries the N6-acetyllysine modification. The residue at position 537 (Ser-537) is a Phosphoserine. The residue at position 620 (Lys-620) is an N6-acetyllysine.

It belongs to the annexin family.

It is found in the cytoplasm. The protein localises to the melanosome. Its function is as follows. May associate with CD21. May regulate the release of Ca(2+) from intracellular stores. In Rattus norvegicus (Rat), this protein is Annexin A6 (Anxa6).